The following is a 1144-amino-acid chain: Type II inositol polyphosphate 5-phosphatase 14 (1144 aa).

Disordered stretches follow at residues 15-67 (ASLV…FDSS) and 81-118 (GRTSGERGNGEECGFVTPPSKPASQGGGNDGGREDDIE). WD repeat units follow at residues 158 to 196 (ETQTGKFLRNIACTESQLWAGQENGVRFWNLEEAYEVGC), 216 to 255 (VPTSPALCLLVDHGNRLVWTGHKDGKIRAWKMNQPNTTTA), 269 to 307 (AHRGPVNYIVISSYGDMWSCSDGGVIKIWTLDSLEKSLV), 445 to 483 (EDTRKVEAIAIAADGSIWTGSMNGVIAQWDGNGSRLREV), and 524 to 561 (SHNEPVIKLAAGGGFIFSLATHGGVRGWYVTSPGPLDS). 2 catalytic regions span residues 791 to 807 (DLVAFFGDFNYRLFGIT) and 870 to 885 (KKRIPAWCDRVIYRDN). Residue lysine 949 forms a Glycyl lysine isopeptide (Lys-Gly) (interchain with G-Cter in ubiquitin) linkage. Residues 1111–1131 (TTMTKNLEGSTRYQTDANRGG) show a composition bias toward polar residues. Residues 1111–1144 (TTMTKNLEGSTRYQTDANRGGSTRHRTDDSTRRG) are disordered. A compositionally biased stretch (basic and acidic residues) spans 1135–1144 (HRTDDSTRRG).

This sequence belongs to the inositol polyphosphate 5-phosphatase family. The cofactor is Mg(2+). In terms of tissue distribution, expressed in young seedlings and flowers.

It carries out the reaction a 1,2-diacyl-sn-glycero-3-phospho-(1D-myo-inositol-4,5-bisphosphate) + H2O = a 1,2-diacyl-sn-glycero-3-phospho-(1D-myo-inositol 4-phosphate) + phosphate. The catalysed reaction is a 1,2-diacyl-sn-glycero-3-phospho-(1D-myo-inositol-3,4,5-trisphosphate) + H2O = a 1,2-diacyl-sn-glycero-3-phospho-(1D-myo-inositol-3,4-bisphosphate) + phosphate. It catalyses the reaction 1D-myo-inositol 1,4,5-trisphosphate + H2O = 1D-myo-inositol 1,4-bisphosphate + phosphate. Its function is as follows. Has phosphatase activity toward PtdIns(4,5)P2, PtdIns(3,4,5)P3 and Ins(1,4,5)P3. The chain is Type II inositol polyphosphate 5-phosphatase 14 from Arabidopsis thaliana (Mouse-ear cress).